A 341-amino-acid chain; its full sequence is Pyrophosphate--fructose 6-phosphate 1-phosphotransferase (341 aa).

Gly10 serves as a coordination point for diphosphate. Residue Glu103 participates in Mg(2+) binding. Residues Thr125 to Asp127, Arg162, Met169 to Arg171, Glu221, Arg265, and His271 to Arg274 contribute to the substrate site. The active-site Proton acceptor is the Asp127.

The protein belongs to the phosphofructokinase type A (PFKA) family. Mixed-substrate PFK group III subfamily. Homodimer or homotetramer. Mg(2+) serves as cofactor.

The protein resides in the cytoplasm. The catalysed reaction is beta-D-fructose 6-phosphate + diphosphate = beta-D-fructose 1,6-bisphosphate + phosphate + H(+). Its pathway is carbohydrate degradation; glycolysis; D-glyceraldehyde 3-phosphate and glycerone phosphate from D-glucose: step 3/4. Its activity is regulated as follows. Non-allosteric. Its function is as follows. Catalyzes the phosphorylation of D-fructose 6-phosphate, the first committing step of glycolysis. Uses inorganic phosphate (PPi) as phosphoryl donor instead of ATP like common ATP-dependent phosphofructokinases (ATP-PFKs), which renders the reaction reversible, and can thus function both in glycolysis and gluconeogenesis. Consistently, PPi-PFK can replace the enzymes of both the forward (ATP-PFK) and reverse (fructose-bisphosphatase (FBPase)) reactions. This is Pyrophosphate--fructose 6-phosphate 1-phosphotransferase from Amycolatopsis mediterranei (strain S699) (Nocardia mediterranei).